A 377-amino-acid polypeptide reads, in one-letter code: Caspase-4 (377 aa).

The required for LPS-binding stretch occupies residues 1–59 (MAEGNHRKKPLKVLESLGKDFLTGVLDNLVEQNVLNWKEEEKKKYYDAKTEDKVRVMAD). Positions 1 to 80 (MAEGNHRKKP…MLLQTFFNID (80 aa)) are excised as a propeptide. The 91-residue stretch at 1 to 91 (MAEGNHRKKP…ISPNKKAHPN (91 aa)) folds into the CARD domain. Alanine 2 is subject to N-acetylalanine. Serine 83 is subject to Phosphoserine. The tract at residues 84–104 (PNKKAHPNMEAGPPESGESTD) is disordered. Active-site residues include histidine 210 and cysteine 258. A propeptide spanning residues 271-289 (SPASLEVASSQSSENLEED) is cleaved from the precursor. Arginine 314 carries the (Microbial infection) ADP-riboxanated arginine modification.

This sequence belongs to the peptidase C14A family. Heterotetramer that consists of two anti-parallel arranged heterodimers, each one formed by a 20 kDa (Caspase-4 subunit p20) and a 10 kDa (Caspase-4 subunit p10) subunit. Upon direct LPS-binding, forms large homooligomers, resulting in its activation. These oligomers are often referred to as 'non-canonical inflammasomes'. In its precursor form, interacts with TMEM214; this interaction is required for association with the endoplasmic reticulum membrane. Interacts with CASP1. Interacts with NOD2. Interacts with SERPINB1; this interaction regulates CASP4 activity. In terms of assembly, heterotetramer that consists of two anti-parallel arranged heterodimers, each one formed by a 20 kDa (Caspase-4 subunit p20) and a 10 kDa (Caspase-4 subunit p10) subunit. As to quaternary structure, (Microbial infection) Interacts with NleF protein from pathogenic E.coli; this interaction leads to enzyme inhibition. (Microbial infection) Interacts with cathepsin CTSG; the interaction is promoted by the Td92 surface protein of the periodontal pathogen T.denticola and leads to CASP4 activation. Post-translationally, in response to activation signals, undergoes autoproteolytic cleavage and activation. In terms of processing, (Microbial infection) ADP-riboxanation by S.flexneri OspC3 blocks CASP4 autoprocessing, preventing CASP4 activation and ability to recognize and cleave GSDMD, thereby thwarting the inflammasome/pyroptosis-mediated defense. Widely expressed, including in keratinocytes and colonic and small intestinal epithelial cells (at protein level). Not detected in brain.

The protein resides in the cytoplasm. Its subcellular location is the cytosol. It localises to the endoplasmic reticulum membrane. The protein localises to the mitochondrion. It is found in the inflammasome. The protein resides in the secreted. It catalyses the reaction Strict requirement for Asp at the P1 position. It has a preferred cleavage sequence of Tyr-Val-Ala-Asp-|- but also cleaves at Asp-Glu-Val-Asp-|-.. Its activity is regulated as follows. Activated by homooligomerization induced by direct binding to cytosolic LPS, in a TLR4-independent manner. In addition to LPS, CASP4/CASP11 may also be activated by oxidized phospholipid 1-palmitoyl-2-arachidonoyl- sn-glycero-3-phosphorylcholine, an oxidized phospholipid (oxPAPC), in dendritic cells, promoting adaptive immunity. The role of oxPAPC is however unclear and another report suggests that oxPAPC competes with LPS-binding and inhibits the non-canonical inflammasome in macrophages. In terms of biological role, inflammatory caspase that acts as the effector of the non-canonical inflammasome by mediating lipopolysaccharide (LPS)-induced pyroptosis. Also indirectly activates the NLRP3 and NLRP6 inflammasomes. Acts as a thiol protease that cleaves a tetrapeptide after an Asp residue at position P1: catalyzes cleavage of CGAS, GSDMD and IL18. Effector of the non-canonical inflammasome independently of NLRP3 inflammasome and CASP1: the non-canonical inflammasome promotes pyroptosis through GSDMD cleavage without involving secretion of cytokine IL1B. In the non-canonical inflammasome, CASP4 is activated by direct binding to the lipid A moiety of LPS without the need of an upstream sensor. LPS-binding promotes CASP4 activation and CASP4-mediated cleavage of GSDMD and IL18, followed by IL18 secretion through the GSDMD pore, pyroptosis of infected cells and their extrusion into the gut lumen. Also indirectly promotes secretion of mature cytokines (IL1A and HMGB1) downstream of GSDMD-mediated pyroptosis via activation of the NLRP3 and NLRP6 inflammasomes. Involved in NLRP3-dependent CASP1 activation and IL1B secretion in response to non-canonical activators, such as UVB radiation or cholera enterotoxin. Involved in NLRP6 inflammasome-dependent activation in response to lipoteichoic acid (LTA), a cell-wall component of Gram-positive bacteria, which leads to CASP1 activation and IL1B secretion. Involved in LPS-induced IL6 secretion; this activity may not require caspase enzymatic activity. The non-canonical inflammasome is required for innate immunity to cytosolic, but not vacuolar, bacteria. Plays a crucial role in the restriction of S.typhimurium replication in colonic epithelial cells during infection. Activation of the non-canonical inflammasome in brain endothelial cells can lead to excessive pyroptosis, leading to blood-brain barrier breakdown. Pyroptosis limits bacterial replication, while cytokine secretion promotes the recruitment and activation of immune cells and triggers mucosal inflammation. May also act as an activator of adaptive immunity in dendritic cells, following activation by oxidized phospholipid 1-palmitoyl-2-arachidonoyl- sn-glycero-3-phosphorylcholine, an oxidized phospholipid (oxPAPC). Involved in cell death induced by endoplasmic reticulum stress and by treatment with cytotoxic APP peptides found in Alzheimer's patient brains. Cleavage of GSDMD is not strictly dependent on the consensus cleavage site but depends on an exosite interface on CASP4 that recognizes and binds the Gasdermin-D, C-terminal (GSDMD-CT) part. Catalyzes cleavage and maturation of IL18; IL18 processing also depends of the exosite interface on CASP4. In contrast, it does not directly process IL1B. During non-canonical inflammasome activation, cuts CGAS and may play a role in the regulation of antiviral innate immune activation. Its function is as follows. (Microbial infection) In response to the Td92 surface protein of the periodontal pathogen T.denticola, activated by cathepsin CTSG which leads to production and secretion of IL1A and pyroptosis of gingival fibroblasts. The chain is Caspase-4 from Homo sapiens (Human).